Here is a 414-residue protein sequence, read N- to C-terminus: Putative cytochrome P450 126 (414 aa).

Residue C363 participates in heme binding.

Belongs to the cytochrome P450 family. Requires heme as cofactor.

This Mycobacterium tuberculosis (strain CDC 1551 / Oshkosh) protein is Putative cytochrome P450 126 (cyp126).